The chain runs to 461 residues: tRNA modification GTPase MnmE (461 aa).

Residues Arg23, Glu84, and Arg123 each contribute to the (6S)-5-formyl-5,6,7,8-tetrahydrofolate site. The TrmE-type G domain occupies 216–383 (GARAALIGRP…LGATVARLLL (168 aa)). Asn226 lines the K(+) pocket. GTP contacts are provided by residues 226-231 (NAGKSS), 245-251 (TPIPGTT), and 270-273 (DTAG). A Mg(2+)-binding site is contributed by Ser230. K(+) is bound by residues Thr245, Ile247, and Thr250. Thr251 serves as a coordination point for Mg(2+). Residue Lys461 participates in (6S)-5-formyl-5,6,7,8-tetrahydrofolate binding.

This sequence belongs to the TRAFAC class TrmE-Era-EngA-EngB-Septin-like GTPase superfamily. TrmE GTPase family. In terms of assembly, homodimer. Heterotetramer of two MnmE and two MnmG subunits. K(+) is required as a cofactor.

It is found in the cytoplasm. Exhibits a very high intrinsic GTPase hydrolysis rate. Involved in the addition of a carboxymethylaminomethyl (cmnm) group at the wobble position (U34) of certain tRNAs, forming tRNA-cmnm(5)s(2)U34. The polypeptide is tRNA modification GTPase MnmE (Roseiflexus sp. (strain RS-1)).